The sequence spans 336 residues: Glycerol-3-phosphate dehydrogenase [NAD(P)+] (336 aa).

NADPH is bound by residues tryptophan 16 and lysine 109. Sn-glycerol 3-phosphate contacts are provided by lysine 109, glycine 137, and serine 139. Residue alanine 141 participates in NADPH binding. Lysine 192, aspartate 245, serine 255, arginine 256, and asparagine 257 together coordinate sn-glycerol 3-phosphate. Catalysis depends on lysine 192, which acts as the Proton acceptor. Arginine 256 provides a ligand contact to NADPH. 2 residues coordinate NADPH: valine 280 and glutamate 282.

This sequence belongs to the NAD-dependent glycerol-3-phosphate dehydrogenase family.

It localises to the cytoplasm. It carries out the reaction sn-glycerol 3-phosphate + NAD(+) = dihydroxyacetone phosphate + NADH + H(+). The catalysed reaction is sn-glycerol 3-phosphate + NADP(+) = dihydroxyacetone phosphate + NADPH + H(+). It functions in the pathway membrane lipid metabolism; glycerophospholipid metabolism. Its function is as follows. Catalyzes the reduction of the glycolytic intermediate dihydroxyacetone phosphate (DHAP) to sn-glycerol 3-phosphate (G3P), the key precursor for phospholipid synthesis. The chain is Glycerol-3-phosphate dehydrogenase [NAD(P)+] from Hyphomonas neptunium (strain ATCC 15444).